A 397-amino-acid polypeptide reads, in one-letter code: MKVAYFDCAAGIAGDMCLGALLDCGLPLEYLNQQLQALGLEGEYSLQVCRVQRCGQPALQAVVEVLDESPPARPWREIQALIAGSRLAPAVKARSLKVFEKLAQAEAKVHQVPLETVHFHEVGAVDALVDIVGTCVGLDWLQVERVISSPHPIGGGWVDTEHGKLAVPVPAVIELWEMGRVPVFSNGVEAELVTPTGAALAVALAEAFGPCPPLRLEKVGRGAGSRELPIPNIFRLWIGQSQGEEPTEIVSVLQTQIDDLNPQVIAYTCEQLLALGAWDVFTQPITMKQGRPGVLLTVICPPERVPECQDFIFRETTTLGIRHSQQQRTVLERRIERVETPYGLVDIKVACRHGHIVNAQPEFRDCVARAQEFRVPVQTVWLAAQAAWQKRLQGDPA.

The protein belongs to the LarC family.

This is Putative nickel insertion protein from Synechococcus sp. (strain JA-3-3Ab) (Cyanobacteria bacterium Yellowstone A-Prime).